The sequence spans 371 residues: Protein disulfide isomerase-like 2-2 (371 aa).

The signal sequence occupies residues 1–27 (MAIPRISPRKTLPLFAALALALAWAFA). Thioredoxin domains follow at residues 28–143 (APAF…TEGG) and 147–262 (KLAT…EKCG). Catalysis depends on nucleophile residues Cys-64, Cys-67, Cys-183, and Cys-186. 2 disulfides stabilise this stretch: Cys-64–Cys-67 and Cys-183–Cys-186.

Belongs to the protein disulfide isomerase family.

Its subcellular location is the secreted. The catalysed reaction is Catalyzes the rearrangement of -S-S- bonds in proteins.. Acts as a protein-folding catalyst that interacts with nascent polypeptides to catalyze the formation, isomerization, and reduction or oxidation of disulfide bonds. May play a role in storage protein biogenesis. In Oryza sativa subsp. japonica (Rice), this protein is Protein disulfide isomerase-like 2-2 (PDIL2-2).